A 245-amino-acid chain; its full sequence is uncharacterized protein (245 aa).

This is an uncharacterized protein from Acanthamoeba polyphaga (Amoeba).